The chain runs to 418 residues: Synaptotagmin-15 (418 aa).

Residues 1–4 are Extracellular-facing; the sequence is MAEQ. A helical; Signal-anchor for type III membrane protein membrane pass occupies residues 5 to 27; the sequence is LAFLIGGIIGGLLLLIGVSCCLW. The Cytoplasmic segment spans residues 28–418; that stretch reads RRFCATFTYE…WHALCRPTEP (391 aa). 2 C2 domains span residues 144 to 261 and 275 to 396; these read CLGR…HRII and EFGD…EHWG.

This sequence belongs to the synaptotagmin family. As to quaternary structure, homodimer. As to expression, isoform 1 and isoform 2 are expressed in heart, lung, skeletal muscle and testis; not detected in brain, liver and kidney. Isoform 1 is expressed in spleen.

It is found in the membrane. Functionally, may be involved in the trafficking and exocytosis of secretory vesicles in non-neuronal tissues. This is Synaptotagmin-15 (Syt15) from Mus musculus (Mouse).